Consider the following 546-residue polypeptide: Germacrene-D synthase (546 aa).

Mg(2+) is bound by residues aspartate 303, aspartate 307, aspartate 448, and glutamate 456. A DDXXD motif motif is present at residues 303–307 (DDIYD).

The protein belongs to the terpene synthase family. It depends on Mg(2+) as a cofactor. Requires Mn(2+) as cofactor.

It carries out the reaction (2E,6E)-farnesyl diphosphate = (-)-germacrene D + diphosphate. It participates in secondary metabolite biosynthesis; terpenoid biosynthesis. Functionally, sesquiterpene synthase that catalyzes the formation of germacrene D from trans,trans-farnesyl diphosphate (FPP). The polypeptide is Germacrene-D synthase (GDS) (Ocimum basilicum (Sweet basil)).